Reading from the N-terminus, the 744-residue chain is TonB-dependent heme receptor A (744 aa).

Positions 1–24 (MNILINKRIFLLVTLVGIQLNVTA) are cleaved as a signal peptide. One can recognise a TBDR plug domain in the interval 45–157 (DDSNKLPGRS…FAGTVKFETK (113 aa)). Residues 168-744 (KIGGFLKYGN…NIKFSLSQKF (577 aa)) enclose the TBDR beta-barrel domain.

This sequence belongs to the TonB-dependent receptor family.

The protein localises to the cell outer membrane. Heme receptor. This is TonB-dependent heme receptor A (tdhA) from Haemophilus influenzae (strain ATCC 51907 / DSM 11121 / KW20 / Rd).